The primary structure comprises 259 residues: Putative electron transfer flavoprotein subunit YgcR (259 aa).

It belongs to the ETF beta-subunit/FixA family. As to quaternary structure, ygcQ and YgcR form a heterodimer.

Functionally, may play a role in a redox process. The chain is Putative electron transfer flavoprotein subunit YgcR (ygcR) from Escherichia coli (strain K12).